The sequence spans 658 residues: Interferon-induced GTP-binding protein Mx1 (658 aa).

N-acetylmethionine is present on Met1. The segment at 1-20 (MVNSKGKITDSDPGSSHLLL) is disordered. Residues 65-338 (DLALPAIAVI…LITHICKTLP (274 aa)) enclose the Dynamin-type G domain. Residues 75–82 (GDQSSGKS) are G1 motif. 75-82 (GDQSSGKS) contributes to the GTP binding site. The G2 motif stretch occupies residues 100 to 102 (VTR). The segment at 176–179 (DLPG) is G3 motif. GTP contacts are provided by residues 176-180 (DLPGI) and 245-248 (TKPD). The interval 245–248 (TKPD) is G4 motif. The tract at residues 277–280 (KCRG) is G5 motif. The tract at residues 339–364 (LLENQIKENYEKITEELQKYGSDVPE) is bundle signaling element (BSE). The segment at 364–531 (EEEHEKMFFL…HFQMEQIVYC (168 aa)) is middle domain. A stalk region spans residues 365-628 (EEHEKMFFLI…KDTHNWLLKE (264 aa)). Residues 551–554 (KDRK) are critical for lipid-binding. The GED domain maps to 570–658 (LSDIFEHLLA…ARRRLAKFPG (89 aa)).

The protein belongs to the TRAFAC class dynamin-like GTPase superfamily. Dynamin/Fzo/YdjA family. As to quaternary structure, homooligomer. Oligomerizes into multimeric filamentous or ring-like structures by virtue of its stalk domain. Oligomerization is critical for GTPase activity, protein stability, and recognition of viral target structures. Interacts with TRPC1, TRPC3, TRPC4, TRPC5, TRPC6 and TRPC7. Interacts with HSPA5. Interacts with TUBB/TUBB5. Interacts with DDX39A and DDX39B. ISGylated.

The protein localises to the cytoplasm. The protein resides in the endoplasmic reticulum membrane. It is found in the perinuclear region. Functionally, interferon-induced dynamin-like GTPase with antiviral activity. In Eumetopias jubatus (Steller sea lion), this protein is Interferon-induced GTP-binding protein Mx1 (MX1).